Reading from the N-terminus, the 298-residue chain is DegV domain-containing protein UU535 (298 aa).

The 283-residue stretch at 5–287 (FLIMTDSSTT…KGALGIQVIA (283 aa)) folds into the DegV domain. S65 and S96 together coordinate hexadecanoate.

May bind long-chain fatty acids, such as palmitate, and may play a role in lipid transport or fatty acid metabolism. The chain is DegV domain-containing protein UU535 from Ureaplasma parvum serovar 3 (strain ATCC 700970).